Here is a 118-residue protein sequence, read N- to C-terminus: Cell division protein FtsB (118 aa).

Topologically, residues 1–6 (MRNWRW) are cytoplasmic. Residues 7 to 24 (LLLVLAALLAWLQHRFWF) form a helical membrane-spanning segment. At 25–118 (GPGNSGEVRM…DLSQPRREKR (94 aa)) the chain is on the periplasmic side. Residues 30 to 66 (GEVRMLQVQIVQQHQENERLRQRNASLAAEVKNLKDG) adopt a coiled-coil conformation. The segment at 98 to 118 (LPNDTSADHGVDLSQPRREKR) is disordered. The span at 103-118 (SADHGVDLSQPRREKR) shows a compositional bias: basic and acidic residues.

The protein belongs to the FtsB family. In terms of assembly, part of a complex composed of FtsB, FtsL and FtsQ.

The protein resides in the cell inner membrane. Its function is as follows. Essential cell division protein. May link together the upstream cell division proteins, which are predominantly cytoplasmic, with the downstream cell division proteins, which are predominantly periplasmic. This chain is Cell division protein FtsB, found in Xylella fastidiosa (strain M12).